Reading from the N-terminus, the 471-residue chain is Ribulose bisphosphate carboxylase large chain (471 aa).

Substrate-binding residues include Asn-115 and Thr-165. Catalysis depends on Lys-167, which acts as the Proton acceptor. Lys-169 provides a ligand contact to substrate. The Mg(2+) site is built by Lys-193, Asp-195, and Glu-196. At Lys-193 the chain carries N6-carboxylysine. His-286 functions as the Proton acceptor in the catalytic mechanism. Residues Arg-287, His-319, and Ser-371 each coordinate substrate.

It belongs to the RuBisCO large chain family. Type I subfamily. In terms of assembly, heterohexadecamer of 8 large chains and 8 small chains. Mg(2+) is required as a cofactor.

Its subcellular location is the carboxysome. It catalyses the reaction 2 (2R)-3-phosphoglycerate + 2 H(+) = D-ribulose 1,5-bisphosphate + CO2 + H2O. The enzyme catalyses D-ribulose 1,5-bisphosphate + O2 = 2-phosphoglycolate + (2R)-3-phosphoglycerate + 2 H(+). Functionally, ruBisCO catalyzes two reactions: the carboxylation of D-ribulose 1,5-bisphosphate, the primary event in carbon dioxide fixation, as well as the oxidative fragmentation of the pentose substrate in the photorespiration process. Both reactions occur simultaneously and in competition at the same active site. The protein is Ribulose bisphosphate carboxylase large chain of Synechococcus sp. (strain WH7803).